The following is a 242-amino-acid chain: Type III pantothenate kinase (242 aa).

7 to 14 (DLGNSRFK) lines the ATP pocket. Substrate contacts are provided by residues Tyr-91 and 98-101 (GVDR). Catalysis depends on Asp-100, which acts as the Proton acceptor. An ATP-binding site is contributed by Thr-121. A substrate-binding site is contributed by Thr-171.

The protein belongs to the type III pantothenate kinase family. Homodimer. NH4(+) is required as a cofactor. K(+) serves as cofactor.

Its subcellular location is the cytoplasm. The catalysed reaction is (R)-pantothenate + ATP = (R)-4'-phosphopantothenate + ADP + H(+). It participates in cofactor biosynthesis; coenzyme A biosynthesis; CoA from (R)-pantothenate: step 1/5. Catalyzes the phosphorylation of pantothenate (Pan), the first step in CoA biosynthesis. This is Type III pantothenate kinase from Xylella fastidiosa (strain M23).